The sequence spans 346 residues: Cyclic GMP-AMP synthase-like protein (346 aa).

ATP is bound by residues Ser58 and 70–72 (EFD). Positions 70, 72, and 165 each coordinate Mg(2+). GTP-binding positions include Asp165 and 212-219 (MVCAPHWE). ATP contacts are provided by residues 216-219 (PHWE), Lys237, and 252-256 (SYMLK).

Belongs to the mab-21 family. Mg(2+) serves as cofactor. It depends on Mn(2+) as a cofactor.

Activated in response of some unknown stimulus. Not activated in response to L-monocytogenes infection. Its function is as follows. Probable nucleotidyltransferase that catalyzes the formation of cyclic dinucleotide second messenger in response to some unknown stimulus. Does not catalyze the formation of cyclic GMP-AMP from ATP and GTP. The protein is Cyclic GMP-AMP synthase-like protein of Drosophila melanogaster (Fruit fly).